A 258-amino-acid chain; its full sequence is Type III pantothenate kinase (258 aa).

Residue 6–13 (DIGNTNTV) participates in ATP binding. Residues Tyr-100 and 107-110 (GADR) contribute to the substrate site. Asp-109 acts as the Proton acceptor in catalysis. Asp-129 is a binding site for K(+). Position 132 (Thr-132) interacts with ATP. Thr-185 is a binding site for substrate.

It belongs to the type III pantothenate kinase family. Homodimer. It depends on NH4(+) as a cofactor. Requires K(+) as cofactor.

The protein resides in the cytoplasm. The enzyme catalyses (R)-pantothenate + ATP = (R)-4'-phosphopantothenate + ADP + H(+). It functions in the pathway cofactor biosynthesis; coenzyme A biosynthesis; CoA from (R)-pantothenate: step 1/5. Catalyzes the phosphorylation of pantothenate (Pan), the first step in CoA biosynthesis. This chain is Type III pantothenate kinase, found in Syntrophobacter fumaroxidans (strain DSM 10017 / MPOB).